The sequence spans 261 residues: tRNA pseudouridine synthase A (261 aa).

Residue D51 is the Nucleophile of the active site. Y109 provides a ligand contact to substrate.

It belongs to the tRNA pseudouridine synthase TruA family. In terms of assembly, homodimer.

The catalysed reaction is uridine(38/39/40) in tRNA = pseudouridine(38/39/40) in tRNA. Formation of pseudouridine at positions 38, 39 and 40 in the anticodon stem and loop of transfer RNAs. The protein is tRNA pseudouridine synthase A of Shewanella baltica (strain OS223).